The sequence spans 92 residues: MARVTVEDAVEQIGNRFDMILVAARRARQIAVQGKDPMVEEMNDKPTVIALREIELGLVNAHTLDADERQTVREREAAEIAAVSAIAEGRSL.

The protein belongs to the RNA polymerase subunit omega family. The RNAP catalytic core consists of 2 alpha, 1 beta, 1 beta' and 1 omega subunit. When a sigma factor is associated with the core the holoenzyme is formed, which can initiate transcription.

The enzyme catalyses RNA(n) + a ribonucleoside 5'-triphosphate = RNA(n+1) + diphosphate. Its function is as follows. Promotes RNA polymerase assembly. Latches the N- and C-terminal regions of the beta' subunit thereby facilitating its interaction with the beta and alpha subunits. This is DNA-directed RNA polymerase subunit omega from Shewanella baltica (strain OS223).